A 294-amino-acid chain; its full sequence is ATP synthase gamma chain (294 aa).

Belongs to the ATPase gamma chain family. F-type ATPases have 2 components, CF(1) - the catalytic core - and CF(0) - the membrane proton channel. CF(1) has five subunits: alpha(3), beta(3), gamma(1), delta(1), epsilon(1). CF(0) has three main subunits: a, b and c.

The protein resides in the cell inner membrane. Its function is as follows. Produces ATP from ADP in the presence of a proton gradient across the membrane. The gamma chain is believed to be important in regulating ATPase activity and the flow of protons through the CF(0) complex. The sequence is that of ATP synthase gamma chain from Campylobacter jejuni subsp. jejuni serotype O:6 (strain 81116 / NCTC 11828).